The sequence spans 569 residues: Urease subunit alpha (569 aa).

In terms of domain architecture, Urease spans 131–569 (GGIDTHIHFI…LPMAQRYFLL (439 aa)). Residues H136, H138, and K219 each coordinate Ni(2+). K219 is modified (N6-carboxylysine). Residue H221 participates in substrate binding. 2 residues coordinate Ni(2+): H248 and H274. The active-site Proton donor is H322. D362 serves as a coordination point for Ni(2+).

The protein belongs to the metallo-dependent hydrolases superfamily. Urease alpha subunit family. As to quaternary structure, heterotrimer of UreA (gamma), UreB (beta) and UreC (alpha) subunits. Three heterotrimers associate to form the active enzyme. Ni cation is required as a cofactor. In terms of processing, carboxylation allows a single lysine to coordinate two nickel ions.

It localises to the cytoplasm. The catalysed reaction is urea + 2 H2O + H(+) = hydrogencarbonate + 2 NH4(+). It functions in the pathway nitrogen metabolism; urea degradation; CO(2) and NH(3) from urea (urease route): step 1/1. This is Urease subunit alpha from Synechococcus sp. (strain RCC307).